Consider the following 361-residue polypeptide: DNA replication and repair protein RecF (361 aa).

Residue 30-37 (GANGSGKT) participates in ATP binding.

The protein belongs to the RecF family.

The protein localises to the cytoplasm. In terms of biological role, the RecF protein is involved in DNA metabolism; it is required for DNA replication and normal SOS inducibility. RecF binds preferentially to single-stranded, linear DNA. It also seems to bind ATP. This is DNA replication and repair protein RecF from Glaesserella parasuis serovar 5 (strain SH0165) (Haemophilus parasuis).